Here is a 333-residue protein sequence, read N- to C-terminus: Terpene synthase 2 (333 aa).

Residues 82-87 carry the DDxx(x)D/E motif motif; the sequence is DDDLDT. The NDxxSxxxD/E motif signature appears at 219–227; sequence NDCVSYAKE.

This sequence belongs to the terpene synthase family.

It carries out the reaction (2E,6E)-farnesyl diphosphate = (E)-beta-farnesene + diphosphate. The enzyme catalyses (2E,6E)-farnesyl diphosphate = (1S,2S,4R)-beta-elemene + diphosphate. Terpene synthase that converts its substrate farnesyl diphosphate (FPP) into the sesquiterpene (E)-beta-farnesene as major product. Is also able to convert FPP into delta-elemene, beta-elemene, (E)-beta-caryophyllene, 9-epi-(E)-caryophyllene, and a yet unidentified sesquiterpene. In Dictyostelium purpureum (Slime mold), this protein is Terpene synthase 2.